A 205-amino-acid polypeptide reads, in one-letter code: Imidazoleglycerol-phosphate dehydratase (205 aa).

This sequence belongs to the imidazoleglycerol-phosphate dehydratase family.

The catalysed reaction is D-erythro-1-(imidazol-4-yl)glycerol 3-phosphate = 3-(imidazol-4-yl)-2-oxopropyl phosphate + H2O. It participates in amino-acid biosynthesis; L-histidine biosynthesis; L-histidine from 5-phospho-alpha-D-ribose 1-diphosphate: step 6/9. The protein is Imidazoleglycerol-phosphate dehydratase (HIS3) of Phaffia rhodozyma (Yeast).